Consider the following 130-residue polypeptide: Small ribosomal subunit protein uS11 (130 aa).

The protein belongs to the universal ribosomal protein uS11 family. As to quaternary structure, part of the 30S ribosomal subunit. Interacts with proteins S7 and S18. Binds to IF-3.

In terms of biological role, located on the platform of the 30S subunit, it bridges several disparate RNA helices of the 16S rRNA. Forms part of the Shine-Dalgarno cleft in the 70S ribosome. The polypeptide is Small ribosomal subunit protein uS11 (Thermotoga petrophila (strain ATCC BAA-488 / DSM 13995 / JCM 10881 / RKU-1)).